Reading from the N-terminus, the 322-residue chain is Phospho-N-acetylmuramoyl-pentapeptide-transferase (322 aa).

10 consecutive transmembrane segments (helical) span residues 6 to 26 (ASCI…PLLI), 54 to 74 (TMGG…VTAW), 82 to 102 (VWIL…DDGI), 122 to 142 (IIIA…FGLY), 145 to 165 (FAGV…WLVG), 176 to 196 (LDGL…YIAF), 200 to 220 (NFAI…FFIF), 227 to 247 (IFMG…VSIM), 255 to 275 (LLVG…VISF), and 302 to 322 (VDIV…AIWG).

It belongs to the glycosyltransferase 4 family. MraY subfamily. Requires Mg(2+) as cofactor.

The protein localises to the cell membrane. It catalyses the reaction UDP-N-acetyl-alpha-D-muramoyl-L-alanyl-gamma-D-glutamyl-L-lysyl-D-alanyl-D-alanine + di-trans,octa-cis-undecaprenyl phosphate = Mur2Ac(oyl-L-Ala-gamma-D-Glu-L-Lys-D-Ala-D-Ala)-di-trans,octa-cis-undecaprenyl diphosphate + UMP. The protein operates within cell wall biogenesis; peptidoglycan biosynthesis. In terms of biological role, catalyzes the initial step of the lipid cycle reactions in the biosynthesis of the cell wall peptidoglycan: transfers peptidoglycan precursor phospho-MurNAc-pentapeptide from UDP-MurNAc-pentapeptide onto the lipid carrier undecaprenyl phosphate, yielding undecaprenyl-pyrophosphoryl-MurNAc-pentapeptide, known as lipid I. This Lactobacillus helveticus (strain DPC 4571) protein is Phospho-N-acetylmuramoyl-pentapeptide-transferase.